Reading from the N-terminus, the 92-residue chain is Small ribosomal subunit protein uS19 (92 aa).

Belongs to the universal ribosomal protein uS19 family.

Functionally, protein S19 forms a complex with S13 that binds strongly to the 16S ribosomal RNA. This is Small ribosomal subunit protein uS19 from Methylobacterium sp. (strain 4-46).